We begin with the raw amino-acid sequence, 254 residues long: Putative hydro-lyase SACE_1553 (254 aa).

This sequence belongs to the D-glutamate cyclase family.

In Saccharopolyspora erythraea (strain ATCC 11635 / DSM 40517 / JCM 4748 / NBRC 13426 / NCIMB 8594 / NRRL 2338), this protein is Putative hydro-lyase SACE_1553.